A 384-amino-acid chain; its full sequence is Putative glutamate--cysteine ligase 2-2 (384 aa).

The protein belongs to the glutamate--cysteine ligase type 2 family. YbdK subfamily.

It catalyses the reaction L-cysteine + L-glutamate + ATP = gamma-L-glutamyl-L-cysteine + ADP + phosphate + H(+). In terms of biological role, ATP-dependent carboxylate-amine ligase which exhibits weak glutamate--cysteine ligase activity. This Rubrobacter xylanophilus (strain DSM 9941 / JCM 11954 / NBRC 16129 / PRD-1) protein is Putative glutamate--cysteine ligase 2-2.